The chain runs to 383 residues: Putative 8-amino-7-oxononanoate synthase (383 aa).

Arginine 22 is a substrate binding site. Residue 109–110 (GY) participates in pyridoxal 5'-phosphate binding. Histidine 134 contacts substrate. Residues serine 182, 207–210 (DDAH), and 236–239 (TLSK) contribute to the pyridoxal 5'-phosphate site. Lysine 239 carries the N6-(pyridoxal phosphate)lysine modification. Threonine 348 contributes to the substrate binding site.

It belongs to the class-II pyridoxal-phosphate-dependent aminotransferase family. BioF subfamily. As to quaternary structure, homodimer. The cofactor is pyridoxal 5'-phosphate.

The catalysed reaction is 6-carboxyhexanoyl-[ACP] + L-alanine + H(+) = (8S)-8-amino-7-oxononanoate + holo-[ACP] + CO2. It functions in the pathway cofactor biosynthesis; biotin biosynthesis. Its function is as follows. Catalyzes the decarboxylative condensation of pimeloyl-[acyl-carrier protein] and L-alanine to produce 8-amino-7-oxononanoate (AON), [acyl-carrier protein], and carbon dioxide. In Caulobacter sp. (strain K31), this protein is Putative 8-amino-7-oxononanoate synthase (bioF).